The following is an 806-amino-acid chain: Centrosomal protein of 85 kDa-like (806 aa).

Disordered regions lie at residues 1-27 (MWGR…AGSD), 51-89 (NNHL…LSFK), and 101-146 (HVMP…SSLD). Ser-15 carries the post-translational modification Phosphoserine. Over residues 60–74 (TSDSGDTGIGTSCSD) the composition is skewed to polar residues. Basic and acidic residues predominate over residues 135–146 (DHSRGERDSSLD). A Phosphoserine modification is found at Ser-207. The disordered stretch occupies residues 308 to 353 (PLEGRTTDDSYSLAPWQQPQTEEFQQGSETPMQVLTGSSRQSYSPP). The span at 322-351 (PWQQPQTEEFQQGSETPMQVLTGSSRQSYS) shows a compositional bias: polar residues. The stretch at 442–644 (QEELEQKLAS…ILEIQSMQGK (203 aa)) forms a coiled coil.

Belongs to the CEP85 family.

Its subcellular location is the cytoplasm. The protein resides in the cytoskeleton. The protein localises to the microtubule organizing center. It localises to the centrosome. Its function is as follows. Plays an essential role in neuronal cell migration. The polypeptide is Centrosomal protein of 85 kDa-like (Mus musculus (Mouse)).